We begin with the raw amino-acid sequence, 396 residues long: B2 bradykinin receptor (396 aa).

Topologically, residues 1–65 are extracellular; it reads MDTRSSLCPK…EWWSWLNAIQ (65 aa). N-linked (GlcNAc...) asparagine glycosylation is found at Asn33 and Asn44. The helical transmembrane segment at 66–89 threads the bilayer; that stretch reads APFLWVLFLLAALENIFVLSVFCL. The Cytoplasmic segment spans residues 90–98; it reads HKTNCTVAE. A helical membrane pass occupies residues 99 to 123; it reads IYLGNLAAADLILACGLPFWAITIA. Over 124 to 136 the chain is Extracellular; sequence NNFDWLFGEVLCR. Residues Cys135 and Cys216 are joined by a disulfide bond. The helical transmembrane segment at 137-158 threads the bilayer; sequence VVNTMIYMNLYSSICFLMLVSI. The Cytoplasmic portion of the chain corresponds to 159-180; the sequence is DRYLALVKTMSMGRMRGVRWAK. Tyr161 carries the post-translational modification Phosphotyrosine. A helical membrane pass occupies residues 181–203; it reads LYSLVIWSCTLLLSSPMLVFRTM. The Extracellular portion of the chain corresponds to 204–226; the sequence is KDYREEGHNVTACVIVYPSRSWE. An N-linked (GlcNAc...) asparagine glycan is attached at Asn212. The helical transmembrane segment at 227-253 threads the bilayer; the sequence is VFTNMLLNLVGFLLPLSIITFCTVRIM. Over 254 to 272 the chain is Cytoplasmic; that stretch reads QVLRNNEMKKFKEVQTEKK. The chain crosses the membrane as a helical span at residues 273–297; it reads ATVLVLAVLGLFVLCWFPFQISTFL. Residues 298 to 316 are Extracellular-facing; sequence DTLLRLGVLSGCWNERAVD. Residues 317 to 340 form a helical membrane-spanning segment; sequence IVTQISSYVAYSNSCLNPLVYVIV. The Cytoplasmic portion of the chain corresponds to 341-396; sequence GKRFRKKSREVYQAICRKGGCMGESVQMENSMGTLRTSISVDRQIHKLQDWAGNKQ. At Tyr352 the chain carries Phosphotyrosine. Cys356 carries S-palmitoyl cysteine lipidation. Residues Ser365 and Ser371 each carry the phosphoserine modification. Thr374 is modified (phosphothreonine). 2 positions are modified to phosphoserine; by GRK6: Ser378 and Ser380.

The protein belongs to the G-protein coupled receptor 1 family. Bradykinin receptor subfamily. BDKRB2 sub-subfamily. As to quaternary structure, forms a complex with PECAM1 and GNAQ. Interacts with PECAM1. In terms of processing, diphosphorylation at Ser-365 and Ser-371, at Ser-378 and Ser-380, and at Thr-374 and Ser-380 seem to be correlated pairwise. Post-translationally, palmitoylation at Cys-356 and phosphorylation at Tyr-352 seem to be mutually exclusive. Uterus, vas deferens, kidney, ileum, heart, testis, lung and brain.

The protein localises to the cell membrane. Functionally, receptor for bradykinin. It is associated with G proteins that activate a phosphatidylinositol-calcium second messenger system. This is B2 bradykinin receptor (Bdkrb2) from Rattus norvegicus (Rat).